The following is a 182-amino-acid chain: Bifunctional protein PyrR (182 aa).

A PRPP-binding motif is present at residues 100–112 (VVLVDDVLYTGRT).

It belongs to the purine/pyrimidine phosphoribosyltransferase family. PyrR subfamily. Homodimer and homohexamer; in equilibrium.

It carries out the reaction UMP + diphosphate = 5-phospho-alpha-D-ribose 1-diphosphate + uracil. In terms of biological role, regulates transcriptional attenuation of the pyrimidine nucleotide (pyr) operon by binding in a uridine-dependent manner to specific sites on pyr mRNA. This disrupts an antiterminator hairpin in the RNA and favors formation of a downstream transcription terminator, leading to a reduced expression of downstream genes. Its function is as follows. Also displays a weak uracil phosphoribosyltransferase activity which is not physiologically significant. This Natranaerobius thermophilus (strain ATCC BAA-1301 / DSM 18059 / JW/NM-WN-LF) protein is Bifunctional protein PyrR.